Reading from the N-terminus, the 248-residue chain is Anamorsin homolog (248 aa).

Residues 4–129 form an N-terminal SAM-like domain region; the sequence is FKGLQKTLYI…ETGSSARLSF (126 aa). The tract at residues 130 to 161 is linker; the sequence is AKKDASALNVWKISGDDEELIDEEDLLDEEDK. Positions 172, 181, 184, and 186 each coordinate [2Fe-2S] cluster. The fe-S binding site A stretch occupies residues 172 to 186; that stretch reads CSTTGKRKACKNCSC. [4Fe-4S] cluster-binding residues include cysteine 209, cysteine 212, cysteine 220, and cysteine 223. 2 consecutive short sequence motifs (cx2C motif) follow at residues 209–212 and 220–223; these read CGNC and CSTC. Positions 209 to 223 are fe-S binding site B; sequence CGNCYLGDAFRCSTC.

The protein belongs to the anamorsin family. Monomer. [2Fe-2S] cluster serves as cofactor. [4Fe-4S] cluster is required as a cofactor.

It is found in the cytoplasm. The protein localises to the mitochondrion intermembrane space. In terms of biological role, component of the cytosolic iron-sulfur (Fe-S) protein assembly (CIA) machinery. Required for the maturation of extramitochondrial Fe-S proteins. Part of an electron transfer chain functioning in an early step of cytosolic Fe-S biogenesis, facilitating the de novo assembly of a [4Fe-4S] cluster on the cytosolic Fe-S scaffold complex. Electrons are transferred from NADPH via a FAD- and FMN-containing diflavin oxidoreductase. Together with the diflavin oxidoreductase, also required for the assembly of the diferric tyrosyl radical cofactor of ribonucleotide reductase (RNR), probably by providing electrons for reduction during radical cofactor maturation in the catalytic small subunit. The sequence is that of Anamorsin homolog from Drosophila ananassae (Fruit fly).